Consider the following 276-residue polypeptide: Formamidopyrimidine-DNA glycosylase (276 aa).

P2 serves as the catalytic Schiff-base intermediate with DNA. The Proton donor role is filled by E3. The active-site Proton donor; for beta-elimination activity is K58. DNA contacts are provided by H92, R111, and K154. The FPG-type zinc-finger motif lies at 239 to 273 (QVYGHAGEECSSCGTILEKIKVNGRGTTFCPHCQV). The Proton donor; for delta-elimination activity role is filled by R263.

Belongs to the FPG family. As to quaternary structure, monomer. The cofactor is Zn(2+).

It carries out the reaction Hydrolysis of DNA containing ring-opened 7-methylguanine residues, releasing 2,6-diamino-4-hydroxy-5-(N-methyl)formamidopyrimidine.. The catalysed reaction is 2'-deoxyribonucleotide-(2'-deoxyribose 5'-phosphate)-2'-deoxyribonucleotide-DNA = a 3'-end 2'-deoxyribonucleotide-(2,3-dehydro-2,3-deoxyribose 5'-phosphate)-DNA + a 5'-end 5'-phospho-2'-deoxyribonucleoside-DNA + H(+). In terms of biological role, involved in base excision repair of DNA damaged by oxidation or by mutagenic agents. Acts as a DNA glycosylase that recognizes and removes damaged bases. Has a preference for oxidized purines, such as 7,8-dihydro-8-oxoguanine (8-oxoG). Has AP (apurinic/apyrimidinic) lyase activity and introduces nicks in the DNA strand. Cleaves the DNA backbone by beta-delta elimination to generate a single-strand break at the site of the removed base with both 3'- and 5'-phosphates. The polypeptide is Formamidopyrimidine-DNA glycosylase (Lactobacillus gasseri (strain ATCC 33323 / DSM 20243 / BCRC 14619 / CIP 102991 / JCM 1131 / KCTC 3163 / NCIMB 11718 / NCTC 13722 / AM63)).